The following is a 335-amino-acid chain: V-set and immunoglobulin domain-containing protein 1 (335 aa).

An N-terminal signal peptide occupies residues 1-21 (MFPTMLKIFPILATLAGHVHG). The Ig-like V-type domain maps to 22-136 (VVVTVPEKTV…SQKSVIVNVL (115 aa)). At 22–233 (VVVTVPEKTV…DLTSMHSDGN (212 aa)) the chain is on the extracellular side. Intrachain disulfides connect C43-C115 and C160-C210. The Ig-like C2-type domain occupies 139 to 226 (PSKPFCKIEG…GNSTCELDLT (88 aa)). The chain crosses the membrane as a helical span at residues 234-254 (IVAGALIGAILAAVIICAIVW). The Cytoplasmic segment spans residues 255–335 (VLTKKAKKKK…QKEETAGSSF (81 aa)). Positions 266-335 (SSNEMQVMAQ…QKEETAGSSF (70 aa)) are disordered. The span at 268–306 (NEMQVMAQKQSNAEYAQVPNEENTPATAVLPSNATNEQP) shows a compositional bias: polar residues. Residues 319–335 (NDEKHEVQKEETAGSSF) are compositionally biased toward basic and acidic residues.

Expressed in thymocytes.

The protein localises to the membrane. The sequence is that of V-set and immunoglobulin domain-containing protein 1 (VSIG1) from Gallus gallus (Chicken).